The following is a 178-amino-acid chain: Ribosome maturation factor RimM (178 aa).

The PRC barrel domain occupies 101 to 178 (TDEYYWYQLV…VMRVEWDADF (78 aa)).

It belongs to the RimM family. In terms of assembly, binds ribosomal protein uS19.

It is found in the cytoplasm. Its function is as follows. An accessory protein needed during the final step in the assembly of 30S ribosomal subunit, possibly for assembly of the head region. Essential for efficient processing of 16S rRNA. May be needed both before and after RbfA during the maturation of 16S rRNA. It has affinity for free ribosomal 30S subunits but not for 70S ribosomes. The polypeptide is Ribosome maturation factor RimM (Pseudomonas entomophila (strain L48)).